Consider the following 1496-residue polypeptide: Chromosome partition protein MukB (1496 aa).

Residue 63 to 70 (GGNGAGKS) coordinates ATP. Coiled-coil stretches lie at residues 328 to 493 (KLEL…QRLS) and 536 to 632 (KMQA…APAW). Positions 694 to 811 (PDGSDDVRLN…EVPLFGRAAR (118 aa)) are flexible hinge. 2 coiled-coil regions span residues 861–1171 (NPEE…SAEE) and 1235–1291 (IDAI…LQNI). The segment covering 1082–1091 (RARSRRDELQ) has biased composition (basic and acidic residues). The interval 1082–1101 (RARSRRDELQQRLSQQRSRK) is disordered.

Belongs to the SMC family. MukB subfamily. Homodimerization via its hinge domain. Binds to DNA via its C-terminal region. Interacts, and probably forms a ternary complex, with MukE and MukF via its C-terminal region. The complex formation is stimulated by calcium or magnesium. Interacts with tubulin-related protein FtsZ.

The protein localises to the cytoplasm. It localises to the nucleoid. Functionally, plays a central role in chromosome condensation, segregation and cell cycle progression. Functions as a homodimer, which is essential for chromosome partition. Involved in negative DNA supercoiling in vivo, and by this means organize and compact chromosomes. May achieve or facilitate chromosome segregation by condensation DNA from both sides of a centrally located replisome during cell division. This Actinobacillus pleuropneumoniae serotype 3 (strain JL03) protein is Chromosome partition protein MukB.